The chain runs to 458 residues: Secretion-regulating guanine nucleotide exchange factor (458 aa).

RCC1 repeat units follow at residues 15–67 (AALF…VTDG), 68–119 (GDLF…LTEN), 120–171 (GQVL…ATAS), 172–230 (GIVF…LTDA), 231–283 (GEVY…QTET), 284–351 (GKMF…IIGG), and 352–402 (VCYS…LCQL). The interval 420 to 458 (DAIEDTESQKAMDKERNWKERQSETSTQSQSDWSRNGGL) is disordered. Positions 426-442 (ESQKAMDKERNWKERQS) are enriched in basic and acidic residues. Phosphoserine is present on serine 427.

In terms of assembly, interacts with SEC5. The interaction occurs only in the presence of magnesium or manganese and is stimulated by dCTP or GTP.

The protein resides in the cytoplasm. It localises to the nucleus. Its function is as follows. Probable guanine nucleotide exchange factor (GEF), which may be involved in the secretion process. This chain is Secretion-regulating guanine nucleotide exchange factor (SERGEF), found in Homo sapiens (Human).